The chain runs to 151 residues: Small ribosomal subunit protein uS9 (151 aa).

Belongs to the universal ribosomal protein uS9 family.

The polypeptide is Small ribosomal subunit protein uS9 (RpS16) (Spodoptera frugiperda (Fall armyworm)).